We begin with the raw amino-acid sequence, 395 residues long: Nuclear hormone receptor family member nhr-10 (395 aa).

Positions 15–90 form a DNA-binding region, nuclear receptor; that stretch reads EEVCLVCSDI…VGMDRNAIQQ (76 aa). NR C4-type zinc fingers lie at residues 18–38 and 54–78; these read CLVCSDISTGYHYGVPSCNGC and CQFQGKCPVDKSIRCACRHCRFEKC. In terms of domain architecture, NR LBD spans 152 to 392; it reads PSRTLIEAVV…TFAKQLLFGI (241 aa).

Belongs to the nuclear hormone receptor family.

Its subcellular location is the nucleus. Functionally, probable transcription factor that acts in a feed-forward loop with nhr-68 to activate genes involved in the vitamin B12-independent breakdown of the short-chain fatty acid propionate. This pathway is triggered in response to a diet low in vitamin B12, when canonical vitamin B12-dependent propionate breakdown cannot function; the resulting accumulation of propionate is probably sensed by nhr-10 and/or nhr-68. This Caenorhabditis elegans protein is Nuclear hormone receptor family member nhr-10 (nhr-10).